Consider the following 214-residue polypeptide: Guanylate kinase (214 aa).

A Guanylate kinase-like domain is found at 12 to 191 (GLMLVMSSPS…SIAAVQAILA (180 aa)). 19-26 (SPSGAGKT) contributes to the ATP binding site.

It belongs to the guanylate kinase family.

The protein localises to the cytoplasm. It catalyses the reaction GMP + ATP = GDP + ADP. In terms of biological role, essential for recycling GMP and indirectly, cGMP. The chain is Guanylate kinase from Paramagnetospirillum magneticum (strain ATCC 700264 / AMB-1) (Magnetospirillum magneticum).